The primary structure comprises 142 residues: HTH-type transcriptional repressor NsrR (142 aa).

In terms of domain architecture, HTH rrf2-type spans 2–129 (QLTSFTDYGL…DRHTLAELVE (128 aa)). The segment at residues 28 to 51 (ITEVTQVYGVSRNHMVKIINQLSH) is a DNA-binding region (H-T-H motif). The [2Fe-2S] cluster site is built by C91, C96, and C102.

The cofactor is [2Fe-2S] cluster.

Functionally, nitric oxide-sensitive repressor of genes involved in protecting the cell against nitrosative stress. May require iron for activity. This Proteus mirabilis (strain HI4320) protein is HTH-type transcriptional repressor NsrR.